Reading from the N-terminus, the 123-residue chain is Large ribosomal subunit protein bL17 (123 aa).

The protein belongs to the bacterial ribosomal protein bL17 family. Part of the 50S ribosomal subunit. Contacts protein L32.

The chain is Large ribosomal subunit protein bL17 from Borreliella afzelii (strain PKo) (Borrelia afzelii).